A 311-amino-acid chain; its full sequence is Aspartate carbamoyltransferase catalytic subunit (311 aa).

Arginine 55 and threonine 56 together coordinate carbamoyl phosphate. Position 85 (lysine 85) interacts with L-aspartate. Carbamoyl phosphate is bound by residues arginine 106, histidine 135, and glutamine 138. Arginine 168 and arginine 230 together coordinate L-aspartate. 2 residues coordinate carbamoyl phosphate: leucine 268 and proline 269.

The protein belongs to the aspartate/ornithine carbamoyltransferase superfamily. ATCase family. In terms of assembly, heterododecamer (2C3:3R2) of six catalytic PyrB chains organized as two trimers (C3), and six regulatory PyrI chains organized as three dimers (R2).

The catalysed reaction is carbamoyl phosphate + L-aspartate = N-carbamoyl-L-aspartate + phosphate + H(+). The protein operates within pyrimidine metabolism; UMP biosynthesis via de novo pathway; (S)-dihydroorotate from bicarbonate: step 2/3. Functionally, catalyzes the condensation of carbamoyl phosphate and aspartate to form carbamoyl aspartate and inorganic phosphate, the committed step in the de novo pyrimidine nucleotide biosynthesis pathway. This Buchnera aphidicola subsp. Schizaphis graminum (strain Sg) protein is Aspartate carbamoyltransferase catalytic subunit.